Reading from the N-terminus, the 303-residue chain is Coenzyme PQQ synthesis protein B (303 aa).

The protein belongs to the PqqB family.

It participates in cofactor biosynthesis; pyrroloquinoline quinone biosynthesis. In terms of biological role, may be involved in the transport of PQQ or its precursor to the periplasm. The polypeptide is Coenzyme PQQ synthesis protein B (Acinetobacter baumannii (strain AB0057)).